Consider the following 359-residue polypeptide: S-adenosylmethionine:tRNA ribosyltransferase-isomerase (359 aa).

Belongs to the QueA family. In terms of assembly, monomer.

It is found in the cytoplasm. It carries out the reaction 7-aminomethyl-7-carbaguanosine(34) in tRNA + S-adenosyl-L-methionine = epoxyqueuosine(34) in tRNA + adenine + L-methionine + 2 H(+). The protein operates within tRNA modification; tRNA-queuosine biosynthesis. Transfers and isomerizes the ribose moiety from AdoMet to the 7-aminomethyl group of 7-deazaguanine (preQ1-tRNA) to give epoxyqueuosine (oQ-tRNA). In Synechococcus elongatus (strain ATCC 33912 / PCC 7942 / FACHB-805) (Anacystis nidulans R2), this protein is S-adenosylmethionine:tRNA ribosyltransferase-isomerase.